Consider the following 466-residue polypeptide: UDP-N-acetylmuramoylalanine--D-glutamate ligase (466 aa).

Gly121–Thr127 lines the ATP pocket.

It belongs to the MurCDEF family.

The protein localises to the cytoplasm. It carries out the reaction UDP-N-acetyl-alpha-D-muramoyl-L-alanine + D-glutamate + ATP = UDP-N-acetyl-alpha-D-muramoyl-L-alanyl-D-glutamate + ADP + phosphate + H(+). Its pathway is cell wall biogenesis; peptidoglycan biosynthesis. In terms of biological role, cell wall formation. Catalyzes the addition of glutamate to the nucleotide precursor UDP-N-acetylmuramoyl-L-alanine (UMA). In Nitrobacter hamburgensis (strain DSM 10229 / NCIMB 13809 / X14), this protein is UDP-N-acetylmuramoylalanine--D-glutamate ligase.